A 107-amino-acid chain; its full sequence is uncharacterized protein (107 aa).

Residues 23 to 64 (SASSSSSTRIPSGFASATSSKSNSSTKSSPSPINSFNNKTNN) form a disordered region. A compositionally biased stretch (low complexity) spans 37–57 (ASATSSKSNSSTKSSPSPINS). The chain crosses the membrane as a helical span at residues 76–98 (LAFGIVEFMVFNGMISTITTTTF).

Its subcellular location is the membrane. This is an uncharacterized protein from Dictyostelium discoideum (Social amoeba).